We begin with the raw amino-acid sequence, 269 residues long: MASEFKKKLFWRAVVAEFLAMTLFVFISIGSALGFKYPVGNNQTAVQDNVKVSLAFGLSIATLAQSVGHISGAHLNPAVTLGLLLSCQISIFRALMYIIAQCVGAIVATAILSGITSSLPGNSLGRNDLADGVNSGQGLGIEIIGTLQLVLCVLATTDRRRRDLGGSAPLAIGLSVALGHLLAIDYTGCGINPARSFGSAVITHNFSNHWIFWVGPFIGGALAVLIYDFILAPRSSDFTDRVKVWTSGQVEEYDLDADDINSRVEMKPK.

At 1–11 (MASEFKKKLFW) the chain is on the cytoplasmic side. Residues 12-29 (RAVVAEFLAMTLFVFISI) form a helical membrane-spanning segment. At 30 to 46 (GSALGFKYPVGNNQTAV) the chain is on the extracellular side. The N-linked (GlcNAc...) asparagine glycan is linked to Asn-42. A helical membrane pass occupies residues 47-65 (QDNVKVSLAFGLSIATLAQ). The Cytoplasmic segment spans residues 66–68 (SVG). An intramembrane segment occupies 69–82 (HISGAHLNPAVTLG). Residues 76–78 (NPA) carry the NPA 1 motif. Residues 83 to 90 (LLLSCQIS) lie on the Cytoplasmic side of the membrane. The helical transmembrane segment at 91 to 109 (IFRALMYIIAQCVGAIVAT) threads the bilayer. Residues 110–133 (AILSGITSSLPGNSLGRNDLADGV) are Extracellular-facing. A helical membrane pass occupies residues 134–153 (NSGQGLGIEIIGTLQLVLCV). Topologically, residues 154-163 (LATTDRRRRD) are cytoplasmic. Residues 164–181 (LGGSAPLAIGLSVALGHL) traverse the membrane as a helical segment. Residues 182-186 (LAIDY) are Extracellular-facing. The stretch at 187–199 (TGCGINPARSFGS) is an intramembrane region. The NPA 2 motif lies at 192–194 (NPA). The Extracellular segment spans residues 200-206 (AVITHNF). The N-linked (GlcNAc...) asparagine glycan is linked to Asn-205. Residues 207–224 (SNHWIFWVGPFIGGALAV) traverse the membrane as a helical segment. Residues 225-269 (LIYDFILAPRSSDFTDRVKVWTSGQVEEYDLDADDINSRVEMKPK) are Cytoplasmic-facing. The residue at position 247 (Ser-247) is a Phosphoserine. Tyr-253 bears the Phosphotyrosine mark. A Phosphoserine modification is found at Ser-262.

It belongs to the MIP/aquaporin (TC 1.A.8) family. In terms of assembly, homotetramer; each monomer provides an independent water pore. Component of the ankyrin-1 complex in the erythrocyte, composed of ANK1, RHCE, RHAG, SLC4A1, EPB42, GYPA, GYPB and AQP1. Interacts with EPHB2; involved in endolymph production in the inner ear. Identified in a complex with STOM. Interacts (via the N-terminal) with ANK1 (via ANK 1-5 repeats). Interacts (via the C-terminal) with EPB42.

It is found in the cell membrane. It catalyses the reaction H2O(in) = H2O(out). The enzyme catalyses nitric oxide(out) = nitric oxide(in). The catalysed reaction is CO2(out) = CO2(in). It carries out the reaction glycerol(in) = glycerol(out). It catalyses the reaction H2O2(out) = H2O2(in). The enzyme catalyses K(+)(in) = K(+)(out). The catalysed reaction is Na(+)(in) = Na(+)(out). Functionally, forms a water channel that facilitates the transport of water across cell membranes, playing a crucial role in water homeostasis in various tissues. Could also be permeable to small solutes including hydrogen peroxide, glycerol and gases such as amonnia (NH3), nitric oxide (NO) and carbon dioxide (CO2). Recruited to the ankyrin-1 complex, a multiprotein complex of the erythrocyte membrane, it could be part of a CO2 metabolon, linking facilitated diffusion of CO2 across the membrane, anion exchange of Cl(-)/HCO3(-) and interconversion of dissolved CO2 and carbonic acid in the cytosol. In vitro, it shows non-selective gated cation channel activity and may be permeable to cations like K(+) and Na(+) in vivo. This chain is Aquaporin-1, found in Pongo abelii (Sumatran orangutan).